Here is a 364-residue protein sequence, read N- to C-terminus: Aminomethyltransferase (364 aa).

The protein belongs to the GcvT family. The glycine cleavage system is composed of four proteins: P, T, L and H.

The catalysed reaction is N(6)-[(R)-S(8)-aminomethyldihydrolipoyl]-L-lysyl-[protein] + (6S)-5,6,7,8-tetrahydrofolate = N(6)-[(R)-dihydrolipoyl]-L-lysyl-[protein] + (6R)-5,10-methylene-5,6,7,8-tetrahydrofolate + NH4(+). In terms of biological role, the glycine cleavage system catalyzes the degradation of glycine. The polypeptide is Aminomethyltransferase (Shigella flexneri serotype 5b (strain 8401)).